A 470-amino-acid polypeptide reads, in one-letter code: Cyclin-B1-3 (470 aa).

It belongs to the cyclin family. Cyclin AB subfamily.

This chain is Cyclin-B1-3 (CYCB1-3), found in Oryza sativa subsp. japonica (Rice).